The primary structure comprises 121 residues: MNHAPHLYFAWQQLVEKSQLMLRLATEEQWDELIASEMAYVNAVQEIAHLTEEIDPSTTMQEQLRPMLRLILDNESKVKQLLQIRMDELAKLVGQSSVQKSVLSAYGDQGGFVLAPQDNFS.

The tract at residues 1-50 is required for homodimerization; sequence MNHAPHLYFAWQQLVEKSQLMLRLATEEQWDELIASEMAYVNAVQEIAHL. Positions 60-98 are fliD binding; sequence MQEQLRPMLRLILDNESKVKQLLQIRMDELAKLVGQSSV.

This sequence belongs to the FliT family. Homodimer. Interacts with FliD and FlhC.

The protein resides in the cytoplasm. The protein localises to the cytosol. Functionally, dual-function protein that regulates the transcription of class 2 flagellar operons and that also acts as an export chaperone for the filament-capping protein FliD. As a transcriptional regulator, acts as an anti-FlhDC factor; it directly binds FlhC, thus inhibiting the binding of the FlhC/FlhD complex to class 2 promoters, resulting in decreased expression of class 2 flagellar operons. As a chaperone, effects FliD transition to the membrane by preventing its premature polymerization, and by directing it to the export apparatus. This is Flagellar protein FliT from Escherichia coli (strain ATCC 8739 / DSM 1576 / NBRC 3972 / NCIMB 8545 / WDCM 00012 / Crooks).